Consider the following 684-residue polypeptide: DNA ligase (684 aa).

NAD(+) is bound by residues 34 to 38 (DYDFD), 83 to 84 (SL), and Glu117. The active-site N6-AMP-lysine intermediate is Lys119. Positions 140, 188, 301, and 325 each coordinate NAD(+). Residues Cys419, Cys422, Cys437, and Cys443 each contribute to the Zn(2+) site. One can recognise a BRCT domain in the interval 602-684 (DAPQTFAGMT…QTMLAAESGD (83 aa)).

Belongs to the NAD-dependent DNA ligase family. LigA subfamily. Mg(2+) is required as a cofactor. The cofactor is Mn(2+).

It carries out the reaction NAD(+) + (deoxyribonucleotide)n-3'-hydroxyl + 5'-phospho-(deoxyribonucleotide)m = (deoxyribonucleotide)n+m + AMP + beta-nicotinamide D-nucleotide.. Functionally, DNA ligase that catalyzes the formation of phosphodiester linkages between 5'-phosphoryl and 3'-hydroxyl groups in double-stranded DNA using NAD as a coenzyme and as the energy source for the reaction. It is essential for DNA replication and repair of damaged DNA. The chain is DNA ligase from Chloroherpeton thalassium (strain ATCC 35110 / GB-78).